The following is a 498-amino-acid chain: Pyridine nucleotide-disulfide oxidoreductase domain-containing protein 1 (498 aa).

At Met1 the chain carries N-acetylmethionine.

Belongs to the class-I pyridine nucleotide-disulfide oxidoreductase family. PYROXD1 subfamily. FAD serves as cofactor.

Its subcellular location is the nucleus. It localises to the cytoplasm. It is found in the myofibril. The protein localises to the sarcomere. In terms of biological role, probable FAD-dependent oxidoreductase; involved in the cellular oxidative stress response. Required for normal sarcomere structure and muscle fiber integrity. This chain is Pyridine nucleotide-disulfide oxidoreductase domain-containing protein 1 (Pyroxd1), found in Mus musculus (Mouse).